We begin with the raw amino-acid sequence, 147 residues long: Large ribosomal subunit protein uL16 (147 aa).

Belongs to the universal ribosomal protein uL16 family. As to quaternary structure, part of the 50S ribosomal subunit.

Binds 23S rRNA and is also seen to make contacts with the A and possibly P site tRNAs. This is Large ribosomal subunit protein uL16 from Lactobacillus delbrueckii subsp. bulgaricus (strain ATCC 11842 / DSM 20081 / BCRC 10696 / JCM 1002 / NBRC 13953 / NCIMB 11778 / NCTC 12712 / WDCM 00102 / Lb 14).